The primary structure comprises 882 residues: Pentatricopeptide repeat-containing protein At3g03580 (882 aa).

PPR repeat units follow at residues Thr3 to Ser37, Ser38 to Ala68, Asn70 to Pro104, Asp105 to Ser139, Asp140 to Arg170, Asp171 to Pro205, Asp206 to Ser240, Val241 to Arg271, Asp272 to Leu307, Thr309 to Leu340, Glu341 to Lys371, Asp372 to Ala406, Asp407 to Ile441, Asp442 to Gly472, Asp473 to Pro507, Asp508 to Ser542, Glu543 to Arg573, Asp574 to Pro608, Asp609 to His639, and Met645 to Lys675. The tract at residues Ile680 to Gly755 is type E motif. A type E(+) motif region spans residues Lys756–Ala786. A type DYW motif region spans residues Lys787–Trp882.

Belongs to the PPR family. PCMP-H subfamily.

This is Pentatricopeptide repeat-containing protein At3g03580 (PCMP-H23) from Arabidopsis thaliana (Mouse-ear cress).